An 89-amino-acid polypeptide reads, in one-letter code: Small ribosomal subunit protein uS14A (89 aa).

This sequence belongs to the universal ribosomal protein uS14 family. In terms of assembly, part of the 30S ribosomal subunit. Contacts proteins S3 and S10.

Functionally, binds 16S rRNA, required for the assembly of 30S particles and may also be responsible for determining the conformation of the 16S rRNA at the A site. The polypeptide is Small ribosomal subunit protein uS14A (Streptococcus equi subsp. zooepidemicus (strain MGCS10565)).